The sequence spans 334 residues: Spermidine synthase 1 (334 aa).

Residues M1–E16 are compositionally biased toward basic and acidic residues. Residues M1–K35 form a disordered region. The region spanning P45 to T282 is the PABS domain. Q76 lines the S-adenosyl 3-(methylsulfanyl)propylamine pocket. Residue Y106 participates in putrescine binding. S-adenosyl 3-(methylsulfanyl)propylamine-binding positions include Q107, D131, E151, D182 to G183, and D201. The active-site Proton acceptor is the D201. Putrescine-binding positions include D201–D204 and Y270.

This sequence belongs to the spermidine/spermine synthase family. Homotetramer and heterodimer. Component of a multiprotein complex. Interacts with SPMS and SPDSYN2.

It carries out the reaction S-adenosyl 3-(methylsulfanyl)propylamine + putrescine = S-methyl-5'-thioadenosine + spermidine + H(+). It participates in amine and polyamine biosynthesis; spermidine biosynthesis; spermidine from putrescine: step 1/1. In Arabidopsis thaliana (Mouse-ear cress), this protein is Spermidine synthase 1 (SPDSYN1).